Consider the following 306-residue polypeptide: Ribonuclease Z (306 aa).

7 residues coordinate Zn(2+): His-63, His-65, Asp-67, His-68, His-141, Asp-208, and His-266. The active-site Proton acceptor is the Asp-67.

Belongs to the RNase Z family. In terms of assembly, homodimer. The cofactor is Zn(2+).

It carries out the reaction Endonucleolytic cleavage of RNA, removing extra 3' nucleotides from tRNA precursor, generating 3' termini of tRNAs. A 3'-hydroxy group is left at the tRNA terminus and a 5'-phosphoryl group is left at the trailer molecule.. In terms of biological role, zinc phosphodiesterase, which displays some tRNA 3'-processing endonuclease activity. Probably involved in tRNA maturation, by removing a 3'-trailer from precursor tRNA. In Chlamydia abortus (strain DSM 27085 / S26/3) (Chlamydophila abortus), this protein is Ribonuclease Z.